The sequence spans 392 residues: Succinyl-diaminopimelate desuccinylase (392 aa).

Residue histidine 75 coordinates Zn(2+). Aspartate 77 is a catalytic residue. Aspartate 108 contacts Zn(2+). Catalysis depends on glutamate 147, which acts as the Proton acceptor. Residues glutamate 148, glutamate 176, and histidine 365 each contribute to the Zn(2+) site.

The protein belongs to the peptidase M20A family. DapE subfamily. As to quaternary structure, homodimer. Zn(2+) serves as cofactor. It depends on Co(2+) as a cofactor.

It catalyses the reaction N-succinyl-(2S,6S)-2,6-diaminopimelate + H2O = (2S,6S)-2,6-diaminopimelate + succinate. Its pathway is amino-acid biosynthesis; L-lysine biosynthesis via DAP pathway; LL-2,6-diaminopimelate from (S)-tetrahydrodipicolinate (succinylase route): step 3/3. Its function is as follows. Catalyzes the hydrolysis of N-succinyl-L,L-diaminopimelic acid (SDAP), forming succinate and LL-2,6-diaminopimelate (DAP), an intermediate involved in the bacterial biosynthesis of lysine and meso-diaminopimelic acid, an essential component of bacterial cell walls. The polypeptide is Succinyl-diaminopimelate desuccinylase (Rhodopseudomonas palustris (strain BisB18)).